Consider the following 583-residue polypeptide: Penicillin-binding protein activator LpoA (583 aa).

The signal sequence occupies residues 1 to 24 (MATILKQKLKTFFVPTAITLLLSA). Residue cysteine 25 is the site of N-palmitoyl cysteine attachment. The S-diacylglycerol cysteine moiety is linked to residue cysteine 25.

This sequence belongs to the LpoA family. Interacts with PBP1a.

The protein localises to the cell outer membrane. Its function is as follows. Regulator of peptidoglycan synthesis that is essential for the function of penicillin-binding protein 1A (PBP1a). This is Penicillin-binding protein activator LpoA from Haemophilus ducreyi (strain 35000HP / ATCC 700724).